The chain runs to 728 residues: Phosphoribosylformylglycinamidine synthase subunit PurL (728 aa).

The active site involves His-54. Residues Tyr-57 and Lys-96 each coordinate ATP. Mg(2+) is bound at residue Glu-98. Residues 99-102 (SHNH) and Arg-121 contribute to the substrate site. His-100 serves as the catalytic Proton acceptor. Residue Asp-122 participates in Mg(2+) binding. Gln-245 contacts substrate. Residue Asp-273 coordinates Mg(2+). Position 317 to 319 (317 to 319 (ETQ)) interacts with substrate. Residues Asp-495 and Gly-532 each contribute to the ATP site. Mg(2+) is bound at residue Asn-533. Ser-535 contacts substrate.

It belongs to the FGAMS family. As to quaternary structure, monomer. Part of the FGAM synthase complex composed of 1 PurL, 1 PurQ and 2 PurS subunits.

It is found in the cytoplasm. It catalyses the reaction N(2)-formyl-N(1)-(5-phospho-beta-D-ribosyl)glycinamide + L-glutamine + ATP + H2O = 2-formamido-N(1)-(5-O-phospho-beta-D-ribosyl)acetamidine + L-glutamate + ADP + phosphate + H(+). It functions in the pathway purine metabolism; IMP biosynthesis via de novo pathway; 5-amino-1-(5-phospho-D-ribosyl)imidazole from N(2)-formyl-N(1)-(5-phospho-D-ribosyl)glycinamide: step 1/2. In terms of biological role, part of the phosphoribosylformylglycinamidine synthase complex involved in the purines biosynthetic pathway. Catalyzes the ATP-dependent conversion of formylglycinamide ribonucleotide (FGAR) and glutamine to yield formylglycinamidine ribonucleotide (FGAM) and glutamate. The FGAM synthase complex is composed of three subunits. PurQ produces an ammonia molecule by converting glutamine to glutamate. PurL transfers the ammonia molecule to FGAR to form FGAM in an ATP-dependent manner. PurS interacts with PurQ and PurL and is thought to assist in the transfer of the ammonia molecule from PurQ to PurL. The sequence is that of Phosphoribosylformylglycinamidine synthase subunit PurL from Macrococcus caseolyticus (strain JCSC5402) (Macrococcoides caseolyticum).